We begin with the raw amino-acid sequence, 539 residues long: Kynureninase 2 (539 aa).

Residues 60 to 87 (DGGVAGETKEPRVPNGVSSATKPNGTVN) are disordered. The segment covering 75–87 (GVSSATKPNGTVN) has biased composition (polar residues). Pyridoxal 5'-phosphate-binding positions include L171, T172, 199–202 (FPSD), D290, H293, and Y315. Residue K316 is modified to N6-(pyridoxal phosphate)lysine. Over residues 340 to 352 (GGGGSGGVGGGRG) the composition is skewed to gly residues. Residues 340–363 (GGGGSGGVGGGRGEGGDGDGGDGG) are disordered. Pyridoxal 5'-phosphate contacts are provided by W379 and N407.

Belongs to the kynureninase family. In terms of assembly, homodimer. It depends on pyridoxal 5'-phosphate as a cofactor.

The protein resides in the cytoplasm. It catalyses the reaction L-kynurenine + H2O = anthranilate + L-alanine + H(+). The catalysed reaction is 3-hydroxy-L-kynurenine + H2O = 3-hydroxyanthranilate + L-alanine + H(+). The protein operates within amino-acid degradation; L-kynurenine degradation; L-alanine and anthranilate from L-kynurenine: step 1/1. It participates in cofactor biosynthesis; NAD(+) biosynthesis; quinolinate from L-kynurenine: step 2/3. In terms of biological role, catalyzes the cleavage of L-kynurenine (L-Kyn) and L-3-hydroxykynurenine (L-3OHKyn) into anthranilic acid (AA) and 3-hydroxyanthranilic acid (3-OHAA), respectively. The protein is Kynureninase 2 of Chaetomium globosum (strain ATCC 6205 / CBS 148.51 / DSM 1962 / NBRC 6347 / NRRL 1970) (Soil fungus).